The chain runs to 571 residues: 5' exonuclease Apollo (571 aa).

Disordered regions lie at residues 346-386 (TSRP…TDRN) and 431-487 (MDDN…SMHD). Composition is skewed to basic and acidic residues over residues 367–386 (NHDD…TDRN) and 453–468 (ECDH…EKSP). Residues 470–487 (MGSTNSGEMCSSMDSMHD) show a composition bias toward polar residues. The TBM motif lies at 501–532 (NPQSVTSAIPITLESEQFEHWLLENFTIPAEE).

This sequence belongs to the DNA repair metallo-beta-lactamase (DRMBL) family. As to quaternary structure, interacts with terf2; the interaction is direct.

It localises to the chromosome. Its subcellular location is the telomere. It is found in the nucleus. It carries out the reaction a beta-lactam + H2O = a substituted beta-amino acid. Its function is as follows. 5'-3' exonuclease that plays a central role in telomere maintenance and protection during S-phase. Participates in the protection of telomeres against non-homologous end-joining (NHEJ)-mediated repair, thereby ensuring that telomeres do not fuse. Plays a key role in telomeric loop (T loop) formation by being recruited by terf2 at the leading end telomeres and by processing leading-end telomeres immediately after their replication via its exonuclease activity: generates 3' single-stranded overhang at the leading end telomeres avoiding blunt leading-end telomeres that are vulnerable to end-joining reactions and expose the telomere end in a manner that activates the DNA repair pathways. Possesses beta-lactamase activity, catalyzing the hydrolysis of penicillin G and nitrocefin. Exhibits no activity towards other beta-lactam antibiotic classes including cephalosporins (cefotaxime) and carbapenems (imipenem). The polypeptide is 5' exonuclease Apollo (dclre1b) (Danio rerio (Zebrafish)).